We begin with the raw amino-acid sequence, 133 residues long: Fatty acid-binding protein, heart (133 aa).

At alanine 2 the chain carries N-acetylalanine. The residue at position 8 (threonine 8) is a Phosphothreonine. Tyrosine 20 is modified (phosphotyrosine; by Tyr-kinases). At serine 23 the chain carries Phosphoserine. Residue threonine 30 is modified to Phosphothreonine. Serine 83 carries the post-translational modification Phosphoserine. (9Z)-octadecenoate is bound at residue 127 to 129; it reads RTY. 127–129 serves as a coordination point for hexadecanoate; it reads RTY. Position 127–129 (127–129) interacts with octadecanoate; that stretch reads RTY.

Belongs to the calycin superfamily. Fatty-acid binding protein (FABP) family.

Its subcellular location is the cytoplasm. FABPs are thought to play a role in the intracellular transport of long-chain fatty acids and their acyl-CoA esters. FABPs are important elements related to the hibernating state in mammals. This chain is Fatty acid-binding protein, heart (FABP3), found in Myotis lucifugus (Little brown bat).